The sequence spans 919 residues: Glutamate receptor ionotropic, kainate 3 (919 aa).

The first 31 residues, 1-31 (MTAPWRRLRSLVWEYWAGLLVCAFWIPDSRG), serve as a signal peptide directing secretion. The Extracellular portion of the chain corresponds to 32–563 (MPHVIRIGGI…VFSFLNPLSP (532 aa)). N-linked (GlcNAc...) asparagine glycosylation is found at asparagine 70, asparagine 76, asparagine 278, asparagine 381, asparagine 415, asparagine 426, and asparagine 433. An intrachain disulfide couples cysteine 99 to cysteine 350. Proline 518, threonine 520, and arginine 525 together coordinate L-glutamate. 2 N-linked (GlcNAc...) asparagine glycosylation sites follow: asparagine 548 and asparagine 551. Residues 564–584 (DIWMYVLLAYLGVSCVLFVIA) traverse the membrane as a helical segment. The Cytoplasmic portion of the chain corresponds to 585–636 (RFSPYEWYDAHPCNPGSEVVENNFTLLNSFWFGMGSLMQQGSELMPKALSTR). The helical transmembrane segment at 637–657 (IIGGIWWFFTLIIISSYTANL) threads the bilayer. Residues 658–820 (AAFLTVERME…KEASALGIQK (163 aa)) lie on the Extracellular side of the membrane. L-glutamate is bound by residues alanine 691, threonine 692, and glutamate 739. Asparagine 752 carries N-linked (GlcNAc...) asparagine glycosylation. A helical membrane pass occupies residues 821 to 841 (IGGIFIVLAAGLVLSVLVAVG). Over 842–919 (EFVYKLRKTA…CSTSLAPVFP (78 aa)) the chain is Cytoplasmic. Position 869 is a phosphoserine (serine 869). Lysine 887 participates in a covalent cross-link: Glycyl lysine isopeptide (Lys-Gly) (interchain with G-Cter in SUMO1).

Belongs to the glutamate-gated ion channel (TC 1.A.10.1) family. GRIK3 subfamily. Homotetramer, and heterotetramer with either GRIK4 or GRIK5. Can form functional heteromeric receptors with GRIK2. Interacts with PRKCABP. Interacts with NETO2.

It is found in the cell membrane. The protein localises to the postsynaptic cell membrane. The catalysed reaction is Ca(2+)(in) = Ca(2+)(out). Ionotropic glutamate receptor that functions as a cation-permeable ligand-gated ion channel, gated by L-glutamate and the glutamatergic agonist kainic acid. Binding of the excitatory neurotransmitter L-glutamate induces a conformation change, leading to the opening of the cation channel, and thereby converts the chemical signal to an electrical impulse. The receptor then desensitizes rapidly and enters a transient inactive state, characterized by the presence of bound agonist. In association with GRIK2, involved in presynaptic facilitation of glutamate release at hippocampal mossy fiber synapses. The protein is Glutamate receptor ionotropic, kainate 3 (GRIK3) of Macaca fascicularis (Crab-eating macaque).